Here is a 131-residue protein sequence, read N- to C-terminus: Large ribosomal subunit protein eL32 (131 aa).

It belongs to the eukaryotic ribosomal protein eL32 family.

The chain is Large ribosomal subunit protein eL32 (rpl32e) from Sulfurisphaera tokodaii (strain DSM 16993 / JCM 10545 / NBRC 100140 / 7) (Sulfolobus tokodaii).